Consider the following 84-residue polypeptide: Small ribosomal subunit protein uS17 (84 aa).

It belongs to the universal ribosomal protein uS17 family. In terms of assembly, part of the 30S ribosomal subunit.

In terms of biological role, one of the primary rRNA binding proteins, it binds specifically to the 5'-end of 16S ribosomal RNA. This Shigella boydii serotype 18 (strain CDC 3083-94 / BS512) protein is Small ribosomal subunit protein uS17.